Consider the following 473-residue polypeptide: Lactate utilization protein B (473 aa).

4Fe-4S ferredoxin-type domains are found at residues 302–332 (GSEF…GHSY) and 351–380 (YDDY…LHDL). [4Fe-4S] cluster is bound by residues Cys-311, Cys-314, Cys-317, Cys-321, Cys-364, Cys-367, and Cys-371.

This sequence belongs to the LutB/YkgF family.

Functionally, is involved in L-lactate degradation and allows cells to grow with lactate as the sole carbon source. Has probably a role as an electron transporter during oxidation of L-lactate. The sequence is that of Lactate utilization protein B from Bacillus anthracis (strain A0248).